Here is a 506-residue protein sequence, read N- to C-terminus: SPbeta prophage-derived uncharacterized protein YonE (506 aa).

Positions 473–506 (YTFTGNEVGRPNEGNKNNDNTVKSATSNGNDNPI) are disordered. A compositionally biased stretch (polar residues) spans 486–506 (GNKNNDNTVKSATSNGNDNPI).

The polypeptide is SPbeta prophage-derived uncharacterized protein YonE (yonE) (Bacillus subtilis (strain 168)).